A 329-amino-acid polypeptide reads, in one-letter code: Beta-ketoacyl-[acyl-carrier-protein] synthase III (329 aa).

Active-site residues include cysteine 123 and histidine 256. An ACP-binding region spans residues 257–261 (QANIR). Asparagine 286 is a catalytic residue.

It belongs to the thiolase-like superfamily. FabH family. In terms of assembly, homodimer.

The protein resides in the cytoplasm. The catalysed reaction is malonyl-[ACP] + acetyl-CoA + H(+) = 3-oxobutanoyl-[ACP] + CO2 + CoA. It functions in the pathway lipid metabolism; fatty acid biosynthesis. Its function is as follows. Catalyzes the condensation reaction of fatty acid synthesis by the addition to an acyl acceptor of two carbons from malonyl-ACP. Catalyzes the first condensation reaction which initiates fatty acid synthesis and may therefore play a role in governing the total rate of fatty acid production. Possesses both acetoacetyl-ACP synthase and acetyl transacylase activities. Its substrate specificity determines the biosynthesis of branched-chain and/or straight-chain of fatty acids. This is Beta-ketoacyl-[acyl-carrier-protein] synthase III from Paraburkholderia phymatum (strain DSM 17167 / CIP 108236 / LMG 21445 / STM815) (Burkholderia phymatum).